Reading from the N-terminus, the 286-residue chain is Beta-lactamase SHV-3 (286 aa).

The N-terminal stretch at 1–21 (MRYIRLCIISLLATLPLAVHA) is a signal peptide. S66 (acyl-ester intermediate) is an active-site residue. C73 and C119 are disulfide-bonded. E164 serves as the catalytic Proton acceptor. 230-232 (KTG) is a substrate binding site.

This sequence belongs to the class-A beta-lactamase family.

The enzyme catalyses a beta-lactam + H2O = a substituted beta-amino acid. This enzyme hydrolyzes cefotaxime, ceftazidime and other broad spectrum cephalosporins. The protein is Beta-lactamase SHV-3 (bla) of Klebsiella pneumoniae.